Here is a 443-residue protein sequence, read N- to C-terminus: Nuclear hormone receptor family member nhr-60 (443 aa).

The span at 1–20 (MIQSSSSISQDSLDLPSILS) shows a compositional bias: low complexity. The disordered stretch occupies residues 1–40 (MIQSSSSISQDSLDLPSILSTFSADEPEDEPSPTAVKSTK). Positions 44–121 (PTECLICGNS…VGMNPLAMEV (78 aa)) form a DNA-binding region, nuclear receptor. 2 NR C4-type zinc fingers span residues 47 to 67 (CLICGNSANGHHYDVASCNGC) and 83 to 104 (CKAKGDCFDLTKRKVPLKCRAC). Positions 196–439 (NEFSGLEYLL…KDLVMRVIED (244 aa)) constitute an NR LBD domain. The interval 225–249 (LRRDQLGPPRLPKPPSPGKPRDSQH) is disordered. The segment covering 233 to 242 (PRLPKPPSPG) has biased composition (pro residues).

It belongs to the nuclear hormone receptor family.

The protein resides in the nucleus. Its function is as follows. Orphan nuclear receptor (Potential). Required for embryonic and larval morphogenesis and probably for seam cell positioning and migration. The protein is Nuclear hormone receptor family member nhr-60 of Caenorhabditis elegans.